A 161-amino-acid chain; its full sequence is Cyclic pyranopterin monophosphate synthase (161 aa).

Residues 75-77 and 113-114 each bind substrate; these read LCH and ME. Aspartate 128 is a catalytic residue.

Belongs to the MoaC family. In terms of assembly, homohexamer; trimer of dimers.

It carries out the reaction (8S)-3',8-cyclo-7,8-dihydroguanosine 5'-triphosphate = cyclic pyranopterin phosphate + diphosphate. It participates in cofactor biosynthesis; molybdopterin biosynthesis. Catalyzes the conversion of (8S)-3',8-cyclo-7,8-dihydroguanosine 5'-triphosphate to cyclic pyranopterin monophosphate (cPMP). In Shigella sonnei (strain Ss046), this protein is Cyclic pyranopterin monophosphate synthase.